Here is a 524-residue protein sequence, read N- to C-terminus: Solute carrier family 35 member F5 (524 aa).

2 helical membrane passes run 69-89 (MALG…SSEL) and 101-121 (FFST…FIIW). Position 207 is a phosphoserine (S207). 8 consecutive transmembrane segments (helical) span residues 244-264 (ISFF…EALS), 269-289 (AIVN…AAVF), 297-317 (FTLS…LVNL), 328-348 (TIGS…IVMI), 362-382 (MFFG…FFLL), 396-416 (VVLL…EFLW), 421-441 (FLTS…LSII), and 453-473 (WLFF…TLLC). Positions 253–317 (FLANLSYQEA…SIGGVVLVNL (65 aa)) constitute an EamA domain.

The protein belongs to the SLC35F solute transporter family.

Its subcellular location is the membrane. In terms of biological role, putative solute transporter. The polypeptide is Solute carrier family 35 member F5 (Slc35f5) (Mus musculus (Mouse)).